We begin with the raw amino-acid sequence, 229 residues long: MAKISKKLSAAYEGIDKQKAYPLFDAIKLAQEKSITKFDGSINIAVKLNLDTTKVEQQLRGSISLPNGNGKNVRVLVLSEDITKEQAAAVGADYFGGADYIQNIEKMLNQIDVIITNQKMMPLLAKLGKVLGPRGLMPNPKIGTVTNDVLKAVEEFKKGRIEYRTDTYGNIHMSIGRVSFETAKIEENANALLSLIRSKKPATVKGQYIQNIAISPTMGPGIKVIINNN.

The protein belongs to the universal ribosomal protein uL1 family. As to quaternary structure, part of the 50S ribosomal subunit.

Its function is as follows. Binds directly to 23S rRNA. The L1 stalk is quite mobile in the ribosome, and is involved in E site tRNA release. In terms of biological role, protein L1 is also a translational repressor protein, it controls the translation of the L11 operon by binding to its mRNA. The polypeptide is Large ribosomal subunit protein uL1 (Ureaplasma urealyticum serovar 10 (strain ATCC 33699 / Western)).